Reading from the N-terminus, the 456-residue chain is Bifunctional protein GlmU (456 aa).

Residues 1–229 form a pyrophosphorylase region; that stretch reads MLNSAMSVVI…ISETDGVNNR (229 aa). UDP-N-acetyl-alpha-D-glucosamine contacts are provided by residues 11–14, Lys25, Gln76, 81–82, 103–105, Gly140, Glu154, Asn169, and Asn227; these read LAAG, GT, and YGD. Residue Asp105 participates in Mg(2+) binding. Asn227 is a binding site for Mg(2+). The tract at residues 230-250 is linker; sequence LQLSRLERIYQAEQAEKLLLS. Positions 251-456 are N-acetyltransferase; the sequence is GVMLRDPARF…QGWQRPVKKK (206 aa). The UDP-N-acetyl-alpha-D-glucosamine site is built by Arg333 and Lys351. Catalysis depends on His363, which acts as the Proton acceptor. UDP-N-acetyl-alpha-D-glucosamine is bound by residues Tyr366 and Asn377. Residues Ala380, 386 to 387, Ser405, Ala423, and Arg440 each bind acetyl-CoA; that span reads NY.

This sequence in the N-terminal section; belongs to the N-acetylglucosamine-1-phosphate uridyltransferase family. The protein in the C-terminal section; belongs to the transferase hexapeptide repeat family. In terms of assembly, homotrimer. It depends on Mg(2+) as a cofactor.

The protein localises to the cytoplasm. The enzyme catalyses alpha-D-glucosamine 1-phosphate + acetyl-CoA = N-acetyl-alpha-D-glucosamine 1-phosphate + CoA + H(+). It catalyses the reaction N-acetyl-alpha-D-glucosamine 1-phosphate + UTP + H(+) = UDP-N-acetyl-alpha-D-glucosamine + diphosphate. It participates in nucleotide-sugar biosynthesis; UDP-N-acetyl-alpha-D-glucosamine biosynthesis; N-acetyl-alpha-D-glucosamine 1-phosphate from alpha-D-glucosamine 6-phosphate (route II): step 2/2. The protein operates within nucleotide-sugar biosynthesis; UDP-N-acetyl-alpha-D-glucosamine biosynthesis; UDP-N-acetyl-alpha-D-glucosamine from N-acetyl-alpha-D-glucosamine 1-phosphate: step 1/1. Its pathway is bacterial outer membrane biogenesis; LPS lipid A biosynthesis. In terms of biological role, catalyzes the last two sequential reactions in the de novo biosynthetic pathway for UDP-N-acetylglucosamine (UDP-GlcNAc). The C-terminal domain catalyzes the transfer of acetyl group from acetyl coenzyme A to glucosamine-1-phosphate (GlcN-1-P) to produce N-acetylglucosamine-1-phosphate (GlcNAc-1-P), which is converted into UDP-GlcNAc by the transfer of uridine 5-monophosphate (from uridine 5-triphosphate), a reaction catalyzed by the N-terminal domain. The sequence is that of Bifunctional protein GlmU from Salmonella schwarzengrund (strain CVM19633).